The primary structure comprises 926 residues: Storkhead-box protein 2 (926 aa).

Disordered stretches follow at residues 1–32 (MKKT…RSEK), 338–394 (EEEK…IPGG), 452–529 (EMPF…SYVD), 632–693 (GVKK…SLDK), 724–803 (LKSH…GTMQ), and 825–926 (LAPK…VTSV). A compositionally biased stretch (basic and acidic residues) spans 18 to 32 (FSDRASDRMRSRSEK). Over residues 353–378 (HSGRSKKSRTHRKSHGKSRSHSKTRV) the composition is skewed to basic residues. Residues 379–394 (SKGDPSDGSHLDIPGG) are compositionally biased toward basic and acidic residues. The span at 463-472 (SHSKVHRSHS) shows a compositional bias: basic residues. Basic and acidic residues predominate over residues 473–495 (HTQDRRSRNERSNKAKERSRSMD). Positions 518–529 (QDDQTPSQSYVD) are enriched in polar residues. 2 stretches are compositionally biased toward basic and acidic residues: residues 632–658 (GVKK…EESP) and 684–693 (HGAEPSSLDK). Residues 746–772 (LGTSAAQATPASQRQQESGGNQETSFD) are compositionally biased toward polar residues. The span at 785-799 (GANKNTEEEKNREDV) shows a compositional bias: basic and acidic residues. Composition is skewed to polar residues over residues 847-884 (MDSS…QNPA) and 914-926 (KPSN…VTSV).

The polypeptide is Storkhead-box protein 2 (STOX2) (Macaca fascicularis (Crab-eating macaque)).